A 95-amino-acid chain; its full sequence is MSRSVKKGPYVQESLLKKINELNKKGEKKVIKTWSRSSTIFPQMIGHTIAVHDGRKHVPVYISEDMVGHKLGEFALTRTYRGHVNKTEKTTRVSR.

Belongs to the universal ribosomal protein uS19 family.

Functionally, protein S19 forms a complex with S13 that binds strongly to the 16S ribosomal RNA. The protein is Small ribosomal subunit protein uS19 of Clostridium kluyveri (strain NBRC 12016).